A 128-amino-acid polypeptide reads, in one-letter code: Sirohydrochlorin cobaltochelatase (128 aa).

Histidine 9 acts as the Proton acceptor in catalysis. Histidine 9 provides a ligand contact to Co(2+). Substrate-binding positions include lysine 43 and 68-73 (FATGTH). Histidine 73 lines the Co(2+) pocket.

This sequence belongs to the CbiX family. CbiXS subfamily. In terms of assembly, homotetramer; dimer of dimers.

The enzyme catalyses Co-sirohydrochlorin + 2 H(+) = sirohydrochlorin + Co(2+). The protein operates within cofactor biosynthesis; adenosylcobalamin biosynthesis; cob(II)yrinate a,c-diamide from sirohydrochlorin (anaerobic route): step 1/10. In terms of biological role, catalyzes the insertion of Co(2+) into sirohydrochlorin as part of the anaerobic pathway to cobalamin biosynthesis. The polypeptide is Sirohydrochlorin cobaltochelatase (Saccharolobus solfataricus (strain ATCC 35092 / DSM 1617 / JCM 11322 / P2) (Sulfolobus solfataricus)).